Here is a 440-residue protein sequence, read N- to C-terminus: Transposon Ty1-NL2 Gag polyprotein (440 aa).

Composition is skewed to polar residues over residues 1 to 23, 48 to 60, 71 to 97, and 129 to 152; these read MESQ…SVTS, TKAN…TPAS, SPQT…NQAN, and QFPQ…GNTF. 3 disordered regions span residues 1-97, 129-171, and 352-440; these read MESQ…NQAN, QFPQ…YVRP, and GSRN…PETY. A compositionally biased stretch (low complexity) spans 153 to 165; that stretch reads TDSSSADSDMTST. Positions 299-401 are RNA-binding; that stretch reads NNGIHINNKV…NSKSKTARAH (103 aa). A compositionally biased stretch (low complexity) spans 402 to 418; that stretch reads NVSTSNNSPSTDNDSIS. A Phosphoserine modification is found at Ser416. The span at 419–428 shows a compositional bias: polar residues; that stretch reads KSTTEPIQLN. Residues 429–440 show a composition bias toward basic and acidic residues; sequence NKHDLHLRPETY.

As to quaternary structure, homotrimer.

It localises to the cytoplasm. Its function is as follows. Capsid protein (CA) is the structural component of the virus-like particle (VLP), forming the shell that encapsulates the retrotransposons dimeric RNA genome. The particles are assembled from trimer-clustered units and there are holes in the capsid shells that allow for the diffusion of macromolecules. CA also has nucleocapsid-like chaperone activity, promoting primer tRNA(i)-Met annealing to the multipartite primer-binding site (PBS), dimerization of Ty1 RNA and initiation of reverse transcription. This Saccharomyces cerevisiae (strain ATCC 204508 / S288c) (Baker's yeast) protein is Transposon Ty1-NL2 Gag polyprotein (TY1A-NL2).